A 308-amino-acid polypeptide reads, in one-letter code: MDKHIPVLLKESIEYLNIKPDGIYVDCTLGRAGHSSEILKKLNQKGFLYAIDQDQIAIDQAKEKLEQINNNFLLIQGNFSNLSALLAINHVFNVDGILYDLGVSSPQIDIASRGFSYKMDGPLDMRMDLNSTLTAHQVINTYSESQISEILFKYGEESFSKSISKKIVESRPINSTLELVEIIKSALPQKVLKQKKHPAKKTFQALRIYINNELIALENSLKQALDLLNSKARICVITFHSLEEKIVKNIFNNSTNYYQEQLLSNLPIKADLNSKFKLVIKKPIKPSLLELEQNHRSHSAKLWVIEKN.

S-adenosyl-L-methionine contacts are provided by residues 32–34 (AGH), aspartate 52, phenylalanine 79, aspartate 100, and glutamine 107.

This sequence belongs to the methyltransferase superfamily. RsmH family.

It is found in the cytoplasm. It catalyses the reaction cytidine(1402) in 16S rRNA + S-adenosyl-L-methionine = N(4)-methylcytidine(1402) in 16S rRNA + S-adenosyl-L-homocysteine + H(+). Functionally, specifically methylates the N4 position of cytidine in position 1402 (C1402) of 16S rRNA. The chain is Ribosomal RNA small subunit methyltransferase H from Mycoplasma mycoides subsp. mycoides SC (strain CCUG 32753 / NCTC 10114 / PG1).